A 468-amino-acid chain; its full sequence is Cysteine--tRNA ligase (468 aa).

Cysteine 29 provides a ligand contact to Zn(2+). Positions 31-41 match the 'HIGH' region motif; the sequence is PTVYNYIHIGN. Residues cysteine 209, histidine 234, and glutamate 238 each coordinate Zn(2+). The 'KMSKS' region motif lies at 266–270; that stretch reads KMSKS. Lysine 269 provides a ligand contact to ATP. Phosphoserine is present on serine 270.

This sequence belongs to the class-I aminoacyl-tRNA synthetase family. As to quaternary structure, monomer. Zn(2+) serves as cofactor.

It localises to the cytoplasm. It carries out the reaction tRNA(Cys) + L-cysteine + ATP = L-cysteinyl-tRNA(Cys) + AMP + diphosphate. The protein is Cysteine--tRNA ligase of Oceanobacillus iheyensis (strain DSM 14371 / CIP 107618 / JCM 11309 / KCTC 3954 / HTE831).